The chain runs to 1088 residues: Serine/threonine-protein kinase LATS2 (1088 aa).

Residues 24–49 are disordered; sequence EGLKQPSKSSVQGLPAGPNSDTSLDA. S83 carries the phosphoserine; by AURKA modification. Residues 98–139 enclose the UBA domain; that stretch reads EVNRQMLQELVNAGCDQEMAGRALKQTGSRSIEAALEYISKM. The interaction with ubiquitinated AMOTL2 stretch occupies residues 101–141; that stretch reads RQMLQELVNAGCDQEMAGRALKQTGSRSIEAALEYISKMGY. Residues 271–280 are compositionally biased toward polar residues; it reads RSPSFQSKTP. Residues 271–323 are disordered; the sequence is RSPSFQSKTPPETGGYASLPTKGQGGPPGAGLAFPPPAAGLYVPHPHHKQAGP. The residue at position 279 (T279) is a Phosphothreonine. Position 380 is a phosphoserine (S380). Disordered regions lie at residues 383–428 and 454–483; these read KPGL…SLPA and PQTA…AAEG. Residues 404–413 show a composition bias toward polar residues; that stretch reads SRTNSFNSHQ. Residues 466 to 478 show a composition bias toward pro residues; that stretch reads VPAPAPAPAPAPA. A PPxY motif motif is present at residues 515–518; it reads PPPY. The interval 543 to 592 is disordered; it reads SLRAGPNEPEGGDKSRKSAKGDKGGKDKKQIQTSPVPVRKNSRDEEKRES. The segment covering 553-572 has biased composition (basic and acidic residues); the sequence is GGDKSRKSAKGDKGGKDKKQ. Position 576 is a phosphoserine (S576). A compositionally biased stretch (basic and acidic residues) spans 583 to 592; the sequence is NSRDEEKRES. The Protein kinase domain maps to 668-973; the sequence is FVKIKTLGIG…ADDLKAHPFF (306 aa). ATP-binding positions include 674 to 682 and K697; that span reads LGIGAFGEV. D791 acts as the Proton acceptor in catalysis. The region spanning 974–1052 is the AGC-kinase C-terminal domain; it reads SAIDFSSDIR…RRFFDDNGYP (79 aa). Positions 994-1022 are disordered; sequence SHPMDTSNFDPVDEESPWNDASEGSTKAW. Position 1041 is a phosphothreonine (T1041). The tract at residues 1056–1088 is disordered; the sequence is PKPSGAEASQAESSDLESSDLVDQTEGCQPVYV.

This sequence belongs to the protein kinase superfamily. AGC Ser/Thr protein kinase family. In terms of assembly, interacts with and is phosphorylated by AURKA. Binds to AR. Interacts with AJUBA during mitosis and this complex regulates organization of the spindle apparatus through recruitment of gamma-tubulin to the centrosome. Interacts (via PPxY motif) with YAP1 (via WW domains). Interacts with MOB1A and MOB1B. Interacts with LIMD1, WTIP and AJUBA. Interacts with SNAI1. Interacts with WWC1, WWC2 and WWC3 (via their WW domains). Interacts (via UBA domain) with ubiquitinated AMOTL2; the interaction promotes LATS2 phosphorylation of YAP1. It depends on Mg(2+) as a cofactor. Autophosphorylated and phosphorylated during M-phase and the G1/S-phase of the cell cycle. Phosphorylated and activated by STK3/MST2. Phosphorylated by MAP4Ks; in parallel to STK3/MST2 and resulting to its activation. Phosphorylation by NUAK2 may regulate its activity in phosphorylation and inactivation YAP1. Expressed at high levels in heart and skeletal muscle and at lower levels in all other tissues examined.

The protein resides in the cytoplasm. Its subcellular location is the cytoskeleton. It localises to the microtubule organizing center. It is found in the centrosome. The protein localises to the spindle pole. The protein resides in the nucleus. The catalysed reaction is L-seryl-[protein] + ATP = O-phospho-L-seryl-[protein] + ADP + H(+). The enzyme catalyses L-threonyl-[protein] + ATP = O-phospho-L-threonyl-[protein] + ADP + H(+). Functionally, negative regulator of YAP1 in the Hippo signaling pathway that plays a pivotal role in organ size control and tumor suppression by restricting proliferation and promoting apoptosis. The core of this pathway is composed of a kinase cascade wherein STK3/MST2 and STK4/MST1, in complex with its regulatory protein SAV1, phosphorylates and activates LATS1/2 in complex with its regulatory protein MOB1, which in turn phosphorylates and inactivates YAP1 oncoprotein and WWTR1/TAZ. Phosphorylation of YAP1 by LATS2 inhibits its translocation into the nucleus to regulate cellular genes important for cell proliferation, cell death, and cell migration. Also phosphorylates YAP1 in response to cell contact inhibition-driven WWP1 ubiquitination of AMOTL2, which results in LATS2 activation. Acts as a tumor suppressor which plays a critical role in centrosome duplication, maintenance of mitotic fidelity and genomic stability. Negatively regulates G1/S transition by down-regulating cyclin E/CDK2 kinase activity. Negative regulator of the androgen receptor. Phosphorylates SNAI1 in the nucleus leading to its nuclear retention and stabilization, which enhances its epithelial-mesenchymal transition and tumor cell invasion/migration activities. This tumor-promoting activity is independent of its effects upon YAP1 or WWTR1/TAZ. Acts as an activator of the NLRP3 inflammasome by mediating phosphorylation of 'Ser-265' of NLRP3 following NLRP3 palmitoylation, promoting NLRP3 activation by NEK7. In Homo sapiens (Human), this protein is Serine/threonine-protein kinase LATS2.